A 967-amino-acid polypeptide reads, in one-letter code: Probable serine/threonine-protein kinase DDB_G0290621 (967 aa).

Disordered regions lie at residues 65–122 (EDSD…KEKE), 215–251 (SSLSSSINNSSNNNSNISSSPLSSSPLTLSSSSSSSS), and 287–326 (QQQLPPPPPSQQQQQQQQQQQQQNNSMLQQSNNNNISPRT). A compositionally biased stretch (acidic residues) spans 66 to 94 (DSDEDDDDEEDEEDEEDSDEEEDDDVVED). Over residues 95–122 (DNTKDIGKSRDSDKSIKGKEKGKEKEKE) the composition is skewed to basic and acidic residues. Residues 297–326 (QQQQQQQQQQQQQNNSMLQQSNNNNISPRT) show a composition bias toward low complexity. The region spanning 345–610 (FNDSNKIGEG…EIRSRLSEII (266 aa)) is the Protein kinase domain. ATP is bound by residues 351-359 (IGEGGQCSI) and Lys-368. Catalysis depends on Asp-467, which acts as the Proton acceptor. Disordered regions lie at residues 634–667 (DDSLINNNNNNNQNNNNQNNNNNNNNNNNNNNNN), 700–752 (STSN…NNNI), and 862–882 (TSSSSNKNNNNNNNDNNNPSN). Low complexity predominate over residues 639-666 (NNNNNNNQNNNNQNNNNNNNNNNNNNNN). Over residues 863–882 (SSSSNKNNNNNNNDNNNPSN) the composition is skewed to low complexity.

The protein belongs to the protein kinase superfamily. TKL Ser/Thr protein kinase family.

The catalysed reaction is L-seryl-[protein] + ATP = O-phospho-L-seryl-[protein] + ADP + H(+). It carries out the reaction L-threonyl-[protein] + ATP = O-phospho-L-threonyl-[protein] + ADP + H(+). This Dictyostelium discoideum (Social amoeba) protein is Probable serine/threonine-protein kinase DDB_G0290621.